The primary structure comprises 147 residues: Ubiquitin-conjugating enzyme E2 D4 (147 aa).

A UBC core domain is found at 1–147 (MALKRIQKEL…AREWTQKYAM (147 aa)). Catalysis depends on Cys-85, which acts as the Glycyl thioester intermediate.

It belongs to the ubiquitin-conjugating enzyme family.

It carries out the reaction S-ubiquitinyl-[E1 ubiquitin-activating enzyme]-L-cysteine + [E2 ubiquitin-conjugating enzyme]-L-cysteine = [E1 ubiquitin-activating enzyme]-L-cysteine + S-ubiquitinyl-[E2 ubiquitin-conjugating enzyme]-L-cysteine.. The protein operates within protein modification; protein ubiquitination. In terms of biological role, accepts ubiquitin from the E1 complex and catalyzes its covalent attachment to other proteins. In vitro able to promote polyubiquitination using all 7 ubiquitin Lys residues, but may prefer 'Lys-11' and 'Lys-48'-linked polyubiquitination. The protein is Ubiquitin-conjugating enzyme E2 D4 (UBE2D4) of Homo sapiens (Human).